A 1177-amino-acid chain; its full sequence is Tyrosine-protein kinase hopscotch (1177 aa).

Residues 1 to 41 (MALANGGEDRMDDSSSGRTSLADSASLTNSSLRSGTSSQSI) form a disordered region. The span at 16–41 (SGRTSLADSASLTNSSLRSGTSSQSI) shows a compositional bias: polar residues. 2 positions are modified to phosphoserine: serine 40 and serine 321. The region spanning 46-414 (GTIRVFNFTT…IYIRLSSKWM (369 aa)) is the FERM domain. In terms of domain architecture, SH2; atypical spans 433–539 (HCHGPIGGAY…YRIPASKYDK (107 aa)). 2 Protein kinase domains span residues 582–843 (YPDS…AEIL) and 892–1164 (YNME…HPTD). ATP is bound by residues 898 to 906 (IGRGHYGTV) and lysine 926. Aspartate 1014 (proton acceptor) is an active-site residue. Tyrosine 1047 and tyrosine 1048 each carry phosphotyrosine; by autocatalysis. A disordered region spans residues 1158–1177 (KVTHPTDGHQSPPNQPTDAE).

This sequence belongs to the protein kinase superfamily. Tyr protein kinase family. JAK subfamily. In terms of assembly, forms a complex with Hsp83 and piwi; probably Hop mediates the interaction between piwi and Hsp83.

It is found in the endomembrane system. It catalyses the reaction L-tyrosyl-[protein] + ATP = O-phospho-L-tyrosyl-[protein] + ADP + H(+). Functionally, tyrosine kinase of the non-receptor type, phosphorylates the marelle protein. Required maternally for the establishment of the normal array of embryonic segments: involved in the control of pair-rule gene transcription in a stripe-specific manner. Together with Hsp83 and piwi, mediates canalization, also known as developmental robustness, likely via epigenetic silencing of existing genetic variants and suppression of transposon-induced new genetic variation. In Drosophila melanogaster (Fruit fly), this protein is Tyrosine-protein kinase hopscotch (hop).